Reading from the N-terminus, the 118-residue chain is UPF0295 protein BCG9842_B4782 (118 aa).

Transmembrane regions (helical) follow at residues 12–32 (IRTFALSLVFIGLFIAYLGVF) and 43–63 (FMMVGFLAVIASTVVYFWIGM).

The protein belongs to the UPF0295 family.

It is found in the cell membrane. This Bacillus cereus (strain G9842) protein is UPF0295 protein BCG9842_B4782.